The following is an 81-amino-acid chain: Small ribosomal subunit protein bS16 (81 aa).

Belongs to the bacterial ribosomal protein bS16 family.

This Lachnospira eligens (strain ATCC 27750 / DSM 3376 / VPI C15-48 / C15-B4) (Eubacterium eligens) protein is Small ribosomal subunit protein bS16.